We begin with the raw amino-acid sequence, 230 residues long: Vacuole-localized protein 4 (230 aa).

A signal peptide spans 1-19 (MRVSSAIFTIASGIAAVSA).

It localises to the vacuole. Vacuolar protein required for aerial conidiation and conidial maturation. Also involved in blastospore production and cell cycle. Plays a vital role in the secretion of Pr1 proteases for cuticular penetration and hence contributes significantly to host infection and virulence. This Beauveria bassiana (strain ARSEF 2860) (White muscardine disease fungus) protein is Vacuole-localized protein 4.